Reading from the N-terminus, the 636-residue chain is DNA-directed RNA polymerase subunit beta' (636 aa).

Zn(2+) contacts are provided by Cys70, Cys72, Cys85, and Cys88. Mg(2+)-binding residues include Asp471, Asp473, and Asp475.

This sequence belongs to the RNA polymerase beta' chain family. RpoC1 subfamily. Mg(2+) serves as cofactor. It depends on Zn(2+) as a cofactor.

It localises to the plastid. The protein resides in the cyanelle. It carries out the reaction RNA(n) + a ribonucleoside 5'-triphosphate = RNA(n+1) + diphosphate. DNA-dependent RNA polymerase catalyzes the transcription of DNA into RNA using the four ribonucleoside triphosphates as substrates. This Cyanophora paradoxa protein is DNA-directed RNA polymerase subunit beta'.